Reading from the N-terminus, the 211-residue chain is Protein-L-isoaspartate O-methyltransferase (211 aa).

Serine 62 is an active-site residue.

The protein belongs to the methyltransferase superfamily. L-isoaspartyl/D-aspartyl protein methyltransferase family.

The protein localises to the cytoplasm. The catalysed reaction is [protein]-L-isoaspartate + S-adenosyl-L-methionine = [protein]-L-isoaspartate alpha-methyl ester + S-adenosyl-L-homocysteine. Functionally, catalyzes the methyl esterification of L-isoaspartyl residues in peptides and proteins that result from spontaneous decomposition of normal L-aspartyl and L-asparaginyl residues. It plays a role in the repair and/or degradation of damaged proteins. The sequence is that of Protein-L-isoaspartate O-methyltransferase from Shewanella halifaxensis (strain HAW-EB4).